The chain runs to 88 residues: Cytochrome c oxidase subunit 6B2 (88 aa).

Residues 1 to 22 (MLDVEAQEPPKGKWSTPPFDPR) form a disordered region. The CHCH domain maps to 29–75 (IRNCYQNFLDYHRCLKTRTRRGKSTQPCEYYFRVYHSLCPISWVESW). The Cx9C motif motif lies at 32–42 (CYQNFLDYHRC). 2 disulfide bridges follow: cysteine 32–cysteine 67 and cysteine 42–cysteine 56. The Cx10C motif motif lies at 56–67 (CEYYFRVYHSLC).

It belongs to the cytochrome c oxidase subunit 6B family. In terms of assembly, component of the cytochrome c oxidase (complex IV, CIV), a multisubunit enzyme composed of 14 subunits. The complex is composed of a catalytic core of 3 subunits MT-CO1, MT-CO2 and MT-CO3, encoded in the mitochondrial DNA, and 11 supernumerary subunits COX4I1 (or COX4I2), COX5A, COX5B, COX6A1 (or COX6A2), COX6B1 (or COX6B2), COX6C, COX7A2 (or COX7A1), COX7B, COX7C, COX8A and NDUFA4, which are encoded in the nuclear genome. The complex exists as a monomer or a dimer and forms supercomplexes (SCs) in the inner mitochondrial membrane with NADH-ubiquinone oxidoreductase (complex I, CI) and ubiquinol-cytochrome c oxidoreductase (cytochrome b-c1 complex, complex III, CIII), resulting in different assemblies (supercomplex SCI(1)III(2)IV(1) and megacomplex MCI(2)III(2)IV(2)). Testis specific. Weak expression in thymus and heart. Expressed in cancer cell lines.

Its subcellular location is the mitochondrion inner membrane. It participates in energy metabolism; oxidative phosphorylation. Functionally, component of the cytochrome c oxidase, the last enzyme in the mitochondrial electron transport chain which drives oxidative phosphorylation. The respiratory chain contains 3 multisubunit complexes succinate dehydrogenase (complex II, CII), ubiquinol-cytochrome c oxidoreductase (cytochrome b-c1 complex, complex III, CIII) and cytochrome c oxidase (complex IV, CIV), that cooperate to transfer electrons derived from NADH and succinate to molecular oxygen, creating an electrochemical gradient over the inner membrane that drives transmembrane transport and the ATP synthase. Cytochrome c oxidase is the component of the respiratory chain that catalyzes the reduction of oxygen to water. Electrons originating from reduced cytochrome c in the intermembrane space (IMS) are transferred via the dinuclear copper A center (CU(A)) of subunit 2 and heme A of subunit 1 to the active site in subunit 1, a binuclear center (BNC) formed by heme A3 and copper B (CU(B)). The BNC reduces molecular oxygen to 2 water molecules using 4 electrons from cytochrome c in the IMS and 4 protons from the mitochondrial matrix. The chain is Cytochrome c oxidase subunit 6B2 (COX6B2) from Homo sapiens (Human).